Reading from the N-terminus, the 453-residue chain is tRNA modification GTPase MnmE (453 aa).

Arginine 22, glutamate 79, and lysine 119 together coordinate (6S)-5-formyl-5,6,7,8-tetrahydrofolate. A TrmE-type G domain is found at 215-376 (GMKVVIAGRP…LRNHLKECMG (162 aa)). Asparagine 225 is a K(+) binding site. GTP is bound by residues 225–230 (NAGKSS), 244–250 (TDIAGTT), 269–272 (DTAG), and 334–337 (NKAD). Serine 229 serves as a coordination point for Mg(2+). Positions 244, 246, and 249 each coordinate K(+). Residue threonine 250 coordinates Mg(2+). A (6S)-5-formyl-5,6,7,8-tetrahydrofolate-binding site is contributed by lysine 453.

It belongs to the TRAFAC class TrmE-Era-EngA-EngB-Septin-like GTPase superfamily. TrmE GTPase family. In terms of assembly, homodimer. Heterotetramer of two MnmE and two MnmG subunits. K(+) is required as a cofactor.

The protein resides in the cytoplasm. Functionally, exhibits a very high intrinsic GTPase hydrolysis rate. Involved in the addition of a carboxymethylaminomethyl (cmnm) group at the wobble position (U34) of certain tRNAs, forming tRNA-cmnm(5)s(2)U34. The chain is tRNA modification GTPase MnmE from Vibrio vulnificus (strain YJ016).